The following is a 247-amino-acid chain: UPF0259 membrane protein BUAPTUC7_273 (247 aa).

6 consecutive transmembrane segments (helical) span residues isoleucine 20–phenylalanine 40, isoleucine 85–phenylalanine 105, isoleucine 114–leucine 134, phenylalanine 137–leucine 157, isoleucine 188–alanine 208, and leucine 218–phenylalanine 238.

This sequence belongs to the UPF0259 family.

The protein resides in the cell membrane. The protein is UPF0259 membrane protein BUAPTUC7_273 of Buchnera aphidicola subsp. Acyrthosiphon pisum (strain Tuc7).